Consider the following 200-residue polypeptide: Peptidyl-tRNA hydrolase (200 aa).

A tRNA-binding site is contributed by Tyr-17. His-22 serves as the catalytic Proton acceptor. 3 residues coordinate tRNA: Tyr-78, Asn-80, and Asn-126.

Belongs to the PTH family. Monomer.

It localises to the cytoplasm. It catalyses the reaction an N-acyl-L-alpha-aminoacyl-tRNA + H2O = an N-acyl-L-amino acid + a tRNA + H(+). Functionally, hydrolyzes ribosome-free peptidyl-tRNAs (with 1 or more amino acids incorporated), which drop off the ribosome during protein synthesis, or as a result of ribosome stalling. Catalyzes the release of premature peptidyl moieties from peptidyl-tRNA molecules trapped in stalled 50S ribosomal subunits, and thus maintains levels of free tRNAs and 50S ribosomes. The protein is Peptidyl-tRNA hydrolase of Cutibacterium acnes (strain DSM 16379 / KPA171202) (Propionibacterium acnes).